The primary structure comprises 554 residues: Zinc finger protein 426 (554 aa).

Residues 42–112 enclose the KRAB domain; it reads VTFDDVAVDF…QGGVLQGWEM (71 aa). A C2H2-type 1; atypical zinc finger spans residues 146–174; it reads CDCEQCGEVFSEHSCLKTHVRTQSTGNTH. C2H2-type zinc fingers lie at residues 224–246, 280–302, 308–330, 336–358, 364–386, 392–414, 420–442, 448–470, 476–498, 504–526, and 532–554; these read FECSHCGKSFINESYLQAHMRTH, YKCKECGKGYRYPAYLSIHMRTH, YECKECGKAFNYSNSFQIHGRTH, YVCKECGKAFTQYSGLSMHVRSH, YECKECGKSFLTSSRLIQHIRTH, FVCVECGKAFAVSSNLSGHLRTH, CECKICGKVFGYPSCLNNHMRTH, YTCKECGKAFNYSTHLKIHMRIH, YECKQCGKAFSHSSSFQIHERTH, YECKECGKAFTCSSSFRIHEKTH, and YKCQQCGKAYSHPRSLRRHEQIH.

It is found in the nucleus. Its function is as follows. May be involved in transcriptional regulation. This Homo sapiens (Human) protein is Zinc finger protein 426 (ZNF426).